The following is a 640-amino-acid chain: Threonine--tRNA ligase (640 aa).

In terms of domain architecture, TGS spans 1–60 (MKITFPDGAVKEFEPGVSTADIAASISPGLKKKALAGKLNGELLDLVTPIHEDGAIEIVT). The interval 241–538 (DHRKLGKELE…LIEEYKGAFP (298 aa)) is catalytic. Residues Cys334, His385, and His515 each coordinate Zn(2+).

The protein belongs to the class-II aminoacyl-tRNA synthetase family. In terms of assembly, homodimer. Requires Zn(2+) as cofactor.

It is found in the cytoplasm. The enzyme catalyses tRNA(Thr) + L-threonine + ATP = L-threonyl-tRNA(Thr) + AMP + diphosphate + H(+). Its function is as follows. Catalyzes the attachment of threonine to tRNA(Thr) in a two-step reaction: L-threonine is first activated by ATP to form Thr-AMP and then transferred to the acceptor end of tRNA(Thr). Also edits incorrectly charged L-seryl-tRNA(Thr). In Listeria monocytogenes serovar 1/2a (strain ATCC BAA-679 / EGD-e), this protein is Threonine--tRNA ligase.